Here is a 408-residue protein sequence, read N- to C-terminus: FAD-dependent monooxygenase nscC (408 aa).

The N-terminal stretch at 1–20 (MASRLPILIIGAGISGLTTA) is a signal peptide. Residues glutamate 34 and alanine 45 each contribute to the FAD site. Residues asparagine 91 and asparagine 103 are each glycosylated (N-linked (GlcNAc...) asparagine). Arginine 119 is a binding site for FAD. 2 N-linked (GlcNAc...) asparagine glycosylation sites follow: asparagine 170 and asparagine 231. Residues aspartate 328 and glycine 341 each coordinate FAD.

The protein belongs to the paxM FAD-dependent monooxygenase family. Requires FAD as cofactor.

The protein operates within secondary metabolite biosynthesis. Its function is as follows. FAD-dependent monooxygenase; part of the gene cluster that mediates the biosynthesis of neosartoricin, a prenylated anthracenone that exhibits T-cell antiproliferative activity, suggestive of a physiological role as an immunosuppressive agent. The non-reducing polyketide synthase nscA probably synthesizes and cyclizes the decaketide backbone. The hydrolase nscB then mediates the product release through hydrolysis followed by spontaneous decarboxylation. The prenyltransferase nscD catalyzes the addition of the dimethylallyl group to the aromatic C5. The FAD-dependent monooxygenase nscC is then responsible for the stereospecific hydroxylation at C2. There is no gene encoding O-acetyltransferase in the nsc gene cluster; thus, the last step of 2-O-acetylation leading to neosartoricin may be catalyzed by an unidentified O-acetyltransferase. In Aspergillus fumigatus (strain ATCC MYA-4609 / CBS 101355 / FGSC A1100 / Af293) (Neosartorya fumigata), this protein is FAD-dependent monooxygenase nscC.